Reading from the N-terminus, the 128-residue chain is Light-regulated protein, chloroplastic (128 aa).

2 repeat units span residues 58 to 72 (VFPM…GEAC) and 111 to 125 (VFPE…GEFC). Residues 58–125 (VFPMEACDLI…ACDDLGGEFC (68 aa)) form a 2 X 15 AA approximate repeats region.

Component of high molecular weight thylakoid LFNRs-containing protein complexes containing LIR1, LFNR1, LFNR2, TIC62 and TROL proteins. Interacts directly with LFNR1 and LFNR2; LIR1 increases the affinity of LFNR1 and LFNR2 for TIC62 and subsequent thylakoid relocalization. May form interchain disulfide bonds with LFNR1 and LFNR2.

Its subcellular location is the plastid. The protein resides in the chloroplast thylakoid membrane. It localises to the chloroplast envelope. The protein localises to the chloroplast stroma. Functionally, thylakoid-determinant subunit of high molecular weight LFNRs-containing protein complexes. In Oryza sativa subsp. japonica (Rice), this protein is Light-regulated protein, chloroplastic (LIR1).